Consider the following 396-residue polypeptide: Interleukin-3 receptor subunit alpha (396 aa).

Positions 1-16 (MAANLWLILGLLASHS) are cleaved as a signal peptide. Residues 17 to 331 (SDLAAVREAP…VCPPEVMPVK (315 aa)) are Extracellular-facing. 5 cysteine pairs are disulfide-bonded: Cys62–Cys79, Cys87–Cys223, Cys125–Cys134, Cys165–Cys187, and Cys245–Cys323. Asn91 is a glycosylation site (N-linked (GlcNAc...) asparagine). Asn213, Asn246, Asn272, and Asn283 each carry an N-linked (GlcNAc...) asparagine glycan. Positions 312–316 (LSSWS) match the WSXWS motif motif. The chain crosses the membrane as a helical span at residues 332-355 (TALVTSVATVLGAGLVAAGLLLWW). Topologically, residues 356 to 396 (RKSLLYRLCPPIPRLRLPLAGEMVVWEPALEDCEVTPVTDA) are cytoplasmic. Residue Lys357 forms a Glycyl lysine isopeptide (Lys-Gly) (interchain with G-Cter in ubiquitin) linkage. A Box 1 motif motif is present at residues 363–371 (LCPPIPRLR).

This sequence belongs to the type I cytokine receptor family. Type 5 subfamily. In terms of assembly, interacts with IL3. Heterodimer of an alpha and a beta subunit. The beta subunit is common to the IL3, IL5 and GM-CSF receptors. Ubiquitinated at Lys-357 by RNFT2 in response to IL3. Ubiquitination leads ligand-induced degradation by the proteasome. Ubiquitinated by RNF128 via 'Lys-27'-linked polyubiquitination, facilitating its degradation through the lysosomal pathway.

Its subcellular location is the cell membrane. It is found in the endomembrane system. Cell surface receptor for IL3 expressed on hematopoietic progenitor cells, monocytes and B-lymphocytes that controls the production and differentiation of hematopoietic progenitor cells into lineage-restricted cells. Ligand stimulation rapidly induces hetrodimerization with IL3RB, phosphorylation and enzyme activity of effector proteins such as JAK2 and PI3K that play a role in signaling cell proliferation and differentiation. Activation of JAK2 leads to STAT5-mediated transcriptional program. The chain is Interleukin-3 receptor subunit alpha (Il3ra) from Mus musculus (Mouse).